The following is a 391-amino-acid chain: Matrix metalloproteinase-23 (391 aa).

The Cytoplasmic segment spans residues 1–18 (MGCRACLRPEASGAVQGR). Residues 1-79 (MGCRACLRPE…LTMSVTRRRR (79 aa)) constitute a propeptide that is removed on maturation. A helical transmembrane segment spans residues 19–39 (WLGAALSGLCLLSALALLEWL). Over 40-391 (GAPTETAWRA…TYSWRVRVRN (352 aa)) the chain is Lumenal. Residues Asn-93 and Asn-149 are each glycosylated (N-linked (GlcNAc...) asparagine). His-212 contributes to the Zn(2+) binding site. Glu-213 is an active-site residue. Positions 216 and 222 each coordinate Zn(2+). N-linked (GlcNAc...) asparagine glycosylation occurs at Asn-233. One can recognise a ShKT domain in the interval 256 to 290 (CLDRIFVCASWARKGFCDVRQRLMKRLCPRSCDFC). 3 disulfides stabilise this stretch: Cys-256/Cys-290, Cys-263/Cys-283, and Cys-272/Cys-287. In terms of domain architecture, Ig-like C2-type spans 298-383 (VATTTSPTRT…RRHQRVLSTY (86 aa)). Asn-317 carries an N-linked (GlcNAc...) asparagine glycan. Cys-322 and Cys-371 are disulfide-bonded.

This sequence belongs to the peptidase M10A family. Requires Zn(2+) as cofactor. In terms of processing, N-glycosylated. Proteolytic cleavage might yield an active form. Expressed at relatively high level in heart, lung and spleen. Not detected in brain, liver, skeletal muscle, kidney and testis.

It is found in the endoplasmic reticulum membrane. The protein resides in the membrane. Inhibited by TIMP2. Its function is as follows. Protease. May regulate the surface expression of some potassium channels by retaining them in the endoplasmic reticulum. This Mus musculus (Mouse) protein is Matrix metalloproteinase-23 (Mmp23).